A 439-amino-acid polypeptide reads, in one-letter code: Histidinol dehydrogenase (439 aa).

NAD(+)-binding residues include Tyr129, Gln193, and Asn222. Substrate-binding residues include Thr245, Gln267, and His270. 2 residues coordinate Zn(2+): Gln267 and His270. Catalysis depends on proton acceptor residues Glu336 and His337. Residues His337, Asp370, Glu424, and His429 each contribute to the substrate site. Zn(2+) is bound at residue Asp370. His429 contacts Zn(2+).

The protein belongs to the histidinol dehydrogenase family. Requires Zn(2+) as cofactor.

It catalyses the reaction L-histidinol + 2 NAD(+) + H2O = L-histidine + 2 NADH + 3 H(+). It participates in amino-acid biosynthesis; L-histidine biosynthesis; L-histidine from 5-phospho-alpha-D-ribose 1-diphosphate: step 9/9. Functionally, catalyzes the sequential NAD-dependent oxidations of L-histidinol to L-histidinaldehyde and then to L-histidine. This is Histidinol dehydrogenase from Cutibacterium acnes (strain DSM 16379 / KPA171202) (Propionibacterium acnes).